The sequence spans 118 residues: Large ribosomal subunit protein bL19 (118 aa).

Belongs to the bacterial ribosomal protein bL19 family.

This protein is located at the 30S-50S ribosomal subunit interface and may play a role in the structure and function of the aminoacyl-tRNA binding site. This Wolinella succinogenes (strain ATCC 29543 / DSM 1740 / CCUG 13145 / JCM 31913 / LMG 7466 / NCTC 11488 / FDC 602W) (Vibrio succinogenes) protein is Large ribosomal subunit protein bL19.